A 29-amino-acid polypeptide reads, in one-letter code: Protein YldA (29 aa).

The helical transmembrane segment at 5-25 (FYILIGFLIMAAIIVMAVLYL) threads the bilayer.

It localises to the cell inner membrane. The sequence is that of Protein YldA from Escherichia coli (strain K12).